Here is a 204-residue protein sequence, read N- to C-terminus: Regulatory protein RecX (204 aa).

The span at 1 to 22 shows a compositional bias: polar residues; that stretch reads MTKSSRPQSISDSVSVAGSQGT. The disordered stretch occupies residues 1–44; it reads MTKSSRPQSISDSVSVAGSQGTLDDLRARVASVPEAPTREPVDS.

Belongs to the RecX family.

It localises to the cytoplasm. Its function is as follows. Modulates RecA activity. This chain is Regulatory protein RecX, found in Mycobacteroides abscessus (strain ATCC 19977 / DSM 44196 / CCUG 20993 / CIP 104536 / JCM 13569 / NCTC 13031 / TMC 1543 / L948) (Mycobacterium abscessus).